A 238-amino-acid chain; its full sequence is uncharacterized protein (238 aa).

The N-terminal stretch at 1 to 19 is a signal peptide; sequence MKINLFFVFLFELLHFVAA. Topologically, residues 20–197 are lumenal; the sequence is YSCEGDESAA…LALYGHLSQK (178 aa). A helical membrane pass occupies residues 198 to 216; that stretch reads YTPLGMNVAIFGISAYIMY. The Cytoplasmic portion of the chain corresponds to 217–238; sequence RSSKKAKQKQAAAAAAAAAKKK.

It localises to the endoplasmic reticulum membrane. This is an uncharacterized protein from Schizosaccharomyces pombe (strain 972 / ATCC 24843) (Fission yeast).